The sequence spans 131 residues: Snaclec bitiscetin subunit alpha (131 aa).

3 cysteine pairs are disulfide-bonded: cysteine 4/cysteine 15, cysteine 32/cysteine 125, and cysteine 100/cysteine 117. Residues 11-126 (YKGHCYKVFK…CGEKNPFICK (116 aa)) form the C-type lectin domain.

This sequence belongs to the snaclec family. In terms of assembly, heterodimer of subunits alpha and beta; disulfide-linked. Expressed by the venom gland.

It localises to the secreted. Its function is as follows. Snaclec that binds to von Willebrand factor (VWF) and induces its interaction with GPIbalpha (GP1BA) (via the vWF A1 domain), resulting in platelet aggregation. This chain is Snaclec bitiscetin subunit alpha, found in Bitis arietans (African puff adder).